Reading from the N-terminus, the 188-residue chain is MRVIASSIRKGNVIEQDGKLYVVLTAENIHPGKGTPVSQIEMRRISDGVKISERYKTTDQVERATIEDHNFTFLYEDGDGFHFMNAETYDQVQVPKDIVGSAAPYLQENMVVKLSLHDMVPVAITLPQRVTLEVVETEPVTKGQTASSSYKPAVLSNGVRTGVPPHVAVGTRVVVMTEDGSYVERAKD.

It belongs to the elongation factor P family.

Its subcellular location is the cytoplasm. It participates in protein biosynthesis; polypeptide chain elongation. In terms of biological role, involved in peptide bond synthesis. Stimulates efficient translation and peptide-bond synthesis on native or reconstituted 70S ribosomes in vitro. Probably functions indirectly by altering the affinity of the ribosome for aminoacyl-tRNA, thus increasing their reactivity as acceptors for peptidyl transferase. This is Elongation factor P from Nitrobacter winogradskyi (strain ATCC 25391 / DSM 10237 / CIP 104748 / NCIMB 11846 / Nb-255).